The primary structure comprises 204 residues: Urease accessory protein UreG (204 aa).

12 to 19 (GPVGSGKT) is a binding site for GTP.

It belongs to the SIMIBI class G3E GTPase family. UreG subfamily. As to quaternary structure, homodimer. UreD, UreF and UreG form a complex that acts as a GTP-hydrolysis-dependent molecular chaperone, activating the urease apoprotein by helping to assemble the nickel containing metallocenter of UreC. The UreE protein probably delivers the nickel.

The protein resides in the cytoplasm. Facilitates the functional incorporation of the urease nickel metallocenter. This process requires GTP hydrolysis, probably effectuated by UreG. The sequence is that of Urease accessory protein UreG from Streptococcus salivarius (strain 57.I).